The sequence spans 399 residues: Type II secretion system protein L (399 aa).

Topologically, residues 1 to 247 (MSKAENTSGK…VKPWKQALLP (247 aa)) are cytoplasmic. A helical transmembrane segment spans residues 248–264 (WRNVLIALSAWLLLVLG). Over 265-399 (ESVWTHYQWY…EGQLTLRSQP (135 aa)) the chain is Periplasmic.

The protein belongs to the GSP L family. In terms of assembly, type II secretion system is composed of four main components: the outer membrane complex, the inner membrane complex, the cytoplasmic secretion ATPase and the periplasm-spanning pseudopilus. Forms homodimers. Interacts with OutM/GspM. Interacts with OutE/GspE and OutF/GspF.

Its subcellular location is the cell inner membrane. Functionally, inner membrane component of the type II secretion system required for the energy-dependent secretion of extracellular factors such as proteases and toxins from the periplasm. Plays a role in the complex assembly and recruits OutM resulting in a stable complex in the inner membrane. Provides thus a link between the energy-providing OutE protein in the cytoplasm and the rest of the T2SS machinery. This is Type II secretion system protein L (outL) from Dickeya chrysanthemi (Pectobacterium chrysanthemi).